A 337-amino-acid chain; its full sequence is uncharacterized protein (337 aa).

Residues 291-314 (NKTRQCSNTKTTTKSTMTPINNGF) are disordered. The span at 299–308 (TKTTTKSTMT) shows a compositional bias: low complexity.

This is an uncharacterized protein from Acanthamoeba polyphaga mimivirus (APMV).